Reading from the N-terminus, the 292-residue chain is Poly-beta-1,6-N-acetyl-D-glucosamine N-deacetylase (292 aa).

A signal peptide spans 1–28 (MKYRKFIILVLSILIILPVSTLDGHHIA). Positions 114–292 (RSVWINFDDM…WDGFHEKDET (179 aa)) constitute a NodB homology domain.

Belongs to the polysaccharide deacetylase family.

The protein localises to the secreted. It localises to the cell wall. In terms of biological role, catalyzes the N-deacetylation of poly-beta-1,6-N-acetyl-D-glucosamine (PNAG, also referred to as PIA), a biofilm adhesin polysaccharide. N-deacetylation is crucial for attachment of the polysaccharide to the bacterial cell surface; it leads to the introduction of positive charges in the otherwise neutral PIA polymer, allowing electrostatic interactions. In Staphylococcus aureus (strain COL), this protein is Poly-beta-1,6-N-acetyl-D-glucosamine N-deacetylase (icaB).